We begin with the raw amino-acid sequence, 65 residues long: DNA-directed RNA polymerase subunit Rpo10 (65 aa).

Zn(2+) contacts are provided by cysteine 7, cysteine 10, cysteine 44, and cysteine 45.

Belongs to the archaeal Rpo10/eukaryotic RPB10 RNA polymerase subunit family. Part of the RNA polymerase complex. It depends on Zn(2+) as a cofactor.

It localises to the cytoplasm. The protein resides in the chromosome. It catalyses the reaction RNA(n) + a ribonucleoside 5'-triphosphate = RNA(n+1) + diphosphate. Its function is as follows. DNA-dependent RNA polymerase (RNAP) catalyzes the transcription of DNA into RNA using the four ribonucleoside triphosphates as substrates. The sequence is that of DNA-directed RNA polymerase subunit Rpo10 from Thermococcus kodakarensis (strain ATCC BAA-918 / JCM 12380 / KOD1) (Pyrococcus kodakaraensis (strain KOD1)).